Reading from the N-terminus, the 464-residue chain is tRNA modification GTPase MnmE (464 aa).

Positions 27, 90, and 129 each coordinate (6S)-5-formyl-5,6,7,8-tetrahydrofolate. In terms of domain architecture, TrmE-type G spans 222–384; it reads GVTLVLAGSV…LYDRIRSFIA (163 aa). GTP contacts are provided by residues 232-237, 251-257, and 276-279; these read NVGKSS, SSYAGTT, and DTAG. Ser-236 is a Mg(2+) binding site. Ser-251 is a K(+) binding site. Residue Thr-257 participates in Mg(2+) binding. Lys-464 is a (6S)-5-formyl-5,6,7,8-tetrahydrofolate binding site.

Belongs to the TRAFAC class TrmE-Era-EngA-EngB-Septin-like GTPase superfamily. TrmE GTPase family. Homodimer. Heterotetramer of two MnmE and two MnmG subunits. K(+) serves as cofactor.

It is found in the cytoplasm. Its function is as follows. Exhibits a very high intrinsic GTPase hydrolysis rate. Involved in the addition of a carboxymethylaminomethyl (cmnm) group at the wobble position (U34) of certain tRNAs, forming tRNA-cmnm(5)s(2)U34. The polypeptide is tRNA modification GTPase MnmE (Borrelia recurrentis (strain A1)).